Here is a 556-residue protein sequence, read N- to C-terminus: Formate--tetrahydrofolate ligase (556 aa).

Position 65–72 (65–72 (TPAGEGKS)) interacts with ATP.

Belongs to the formate--tetrahydrofolate ligase family.

The enzyme catalyses (6S)-5,6,7,8-tetrahydrofolate + formate + ATP = (6R)-10-formyltetrahydrofolate + ADP + phosphate. It participates in one-carbon metabolism; tetrahydrofolate interconversion. The protein is Formate--tetrahydrofolate ligase of Clostridium perfringens (strain SM101 / Type A).